A 368-amino-acid polypeptide reads, in one-letter code: Phospho-N-acetylmuramoyl-pentapeptide-transferase (368 aa).

9 helical membrane passes run 30–50, 72–92, 99–119, 139–159, 170–190, 201–221, 238–258, 264–286, and 345–365; these read AAAV…IKYL, LPTM…FLWA, VWLI…DDYM, VLLG…SVLL, LTID…TAVS, GLAS…AYLA, GGEI…FLWF, EIIM…ALLI, and KIVI…LMTL.

It belongs to the glycosyltransferase 4 family. MraY subfamily. Mg(2+) is required as a cofactor.

It is found in the cell inner membrane. The enzyme catalyses UDP-N-acetyl-alpha-D-muramoyl-L-alanyl-gamma-D-glutamyl-meso-2,6-diaminopimeloyl-D-alanyl-D-alanine + di-trans,octa-cis-undecaprenyl phosphate = di-trans,octa-cis-undecaprenyl diphospho-N-acetyl-alpha-D-muramoyl-L-alanyl-D-glutamyl-meso-2,6-diaminopimeloyl-D-alanyl-D-alanine + UMP. It functions in the pathway cell wall biogenesis; peptidoglycan biosynthesis. Catalyzes the initial step of the lipid cycle reactions in the biosynthesis of the cell wall peptidoglycan: transfers peptidoglycan precursor phospho-MurNAc-pentapeptide from UDP-MurNAc-pentapeptide onto the lipid carrier undecaprenyl phosphate, yielding undecaprenyl-pyrophosphoryl-MurNAc-pentapeptide, known as lipid I. This chain is Phospho-N-acetylmuramoyl-pentapeptide-transferase, found in Chlorobium limicola (strain DSM 245 / NBRC 103803 / 6330).